The primary structure comprises 576 residues: Polyphenol oxidase 3 (576 aa).

The Cu cation site is built by H61, H85, H94, H259, H263, and H296. The 2'-(S-cysteinyl)-histidine (Cys-His) cross-link spans C83–H85. H263 is a binding site for substrate. A propeptide spans F393–N576 (removed in mature form).

The protein belongs to the tyrosinase family. As to quaternary structure, tetramer composed of two subunits of PPO3 (H subunits) and two subunits of the as yet uncharacterized product of ORF239342 (L subunits). The cofactor is Cu(2+). In terms of processing, the C-ter is probably cleaved after Gly-392 since the mature active protein is smaller than the protein encoded by the gene.

The enzyme catalyses 2 L-dopa + O2 = 2 L-dopaquinone + 2 H2O. It catalyses the reaction L-tyrosine + O2 = L-dopaquinone + H2O. Copper-containing oxidase that catalyzes both the o-hydroxylation of monophenols and the subsequent oxidation of the resulting o-diphenols into reactive o-quinones, which evolve spontaneously to produce intermediates, which associate in dark brown pigments. Involved in the initial step of melanin synthesis. Melanins constitute a mechanism of defense and resistance to stress such as UV radiations, free radicals, gamma rays, dehydratation and extreme temperatures, and contribute to the fungal cell-wall resistance against hydrolytic enzymes in avoiding cellular lysis. Fungal pigments are also involved in the formation and stability of spores. The polypeptide is Polyphenol oxidase 3 (PPO3) (Agaricus bisporus (White button mushroom)).